We begin with the raw amino-acid sequence, 172 residues long: Ribosome maturation factor RimM (172 aa).

The region spanning 96–168 (DGEFYYHEII…RVQVELMEGL (73 aa)) is the PRC barrel domain.

This sequence belongs to the RimM family. In terms of assembly, binds ribosomal protein uS19.

The protein localises to the cytoplasm. In terms of biological role, an accessory protein needed during the final step in the assembly of 30S ribosomal subunit, possibly for assembly of the head region. Essential for efficient processing of 16S rRNA. May be needed both before and after RbfA during the maturation of 16S rRNA. It has affinity for free ribosomal 30S subunits but not for 70S ribosomes. The protein is Ribosome maturation factor RimM of Streptococcus agalactiae serotype III (strain NEM316).